The chain runs to 283 residues: Probable endonuclease 4 (283 aa).

Residues His69, His109, Glu144, Asp178, His181, His215, Asp228, His230, and Glu260 each coordinate Zn(2+).

This sequence belongs to the AP endonuclease 2 family. Zn(2+) is required as a cofactor.

The catalysed reaction is Endonucleolytic cleavage to 5'-phosphooligonucleotide end-products.. Endonuclease IV plays a role in DNA repair. It cleaves phosphodiester bonds at apurinic or apyrimidinic (AP) sites, generating a 3'-hydroxyl group and a 5'-terminal sugar phosphate. This is Probable endonuclease 4 from Thermosipho melanesiensis (strain DSM 12029 / CIP 104789 / BI429).